We begin with the raw amino-acid sequence, 193 residues long: Large ribosomal subunit protein eL18 (193 aa).

The segment at 158 to 193 (HFGAAGVPGSHAKPHVSSRGKERQRSSKRRHAFRHK) is disordered. A compositionally biased stretch (basic residues) spans 183–193 (SSKRRHAFRHK).

This sequence belongs to the eukaryotic ribosomal protein eL18 family.

It is found in the cytoplasm. The polypeptide is Large ribosomal subunit protein eL18 (RPL18-A) (Trypanosoma brucei brucei (strain 927/4 GUTat10.1)).